Here is a 169-residue protein sequence, read N- to C-terminus: Allophycocyanin subunit beta-18 (169 aa).

The residue at position 72 (N72) is an N4-methylasparagine. Residue C82 participates in (2R,3E)-phycocyanobilin binding.

It belongs to the phycobiliprotein family. In terms of assembly, heterodimer of ApcE and this beta chain. In terms of processing, contains one covalently linked bilin chromophore.

The protein localises to the cellular thylakoid membrane. In terms of biological role, a variant beta-allophycocyanin (AP) which forms a complex with ApcE, a phycobilisome terminal emitter that influences energy transfer to photosystem II. The polypeptide is Allophycocyanin subunit beta-18 (apcF) (Synechocystis sp. (strain ATCC 27184 / PCC 6803 / Kazusa)).